The sequence spans 123 residues: Small ribosomal subunit protein uS12 (123 aa).

D89 is modified (3-methylthioaspartic acid).

Belongs to the universal ribosomal protein uS12 family. In terms of assembly, part of the 30S ribosomal subunit. Contacts proteins S8 and S17. May interact with IF1 in the 30S initiation complex.

Functionally, with S4 and S5 plays an important role in translational accuracy. Its function is as follows. Interacts with and stabilizes bases of the 16S rRNA that are involved in tRNA selection in the A site and with the mRNA backbone. Located at the interface of the 30S and 50S subunits, it traverses the body of the 30S subunit contacting proteins on the other side and probably holding the rRNA structure together. The combined cluster of proteins S8, S12 and S17 appears to hold together the shoulder and platform of the 30S subunit. In Acidiphilium cryptum (strain JF-5), this protein is Small ribosomal subunit protein uS12.